Here is a 247-residue protein sequence, read N- to C-terminus: Pleckstrin homology domain-containing family F member 2 (247 aa).

One can recognise a PH domain in the interval 35-131 (VLIGEGVLTK…WMSHINKCVS (97 aa)). The FYVE-type zinc-finger motif lies at 152 to 212 (DSEATVCMRC…VCEFCYKQLS (61 aa)). Residues Cys158, Cys161, Cys175, Cys178, Cys183, Cys186, Cys204, and Cys207 each coordinate Zn(2+). The segment at 213–247 (TGATLPPRSDSYSRQGSDFGSNNISDDDDDDDSSD) is disordered. Positions 222 to 236 (DSYSRQGSDFGSNNI) are enriched in polar residues. A compositionally biased stretch (acidic residues) spans 237–247 (SDDDDDDDSSD).

It is found in the early endosome membrane. It localises to the endoplasmic reticulum. May play a role in early endosome fusion upstream of RAB5, hence regulating receptor trafficking and fluid-phase transport. Enhances cellular sensitivity to TNF-induced apoptosis. This chain is Pleckstrin homology domain-containing family F member 2 (plekhf2), found in Danio rerio (Zebrafish).